We begin with the raw amino-acid sequence, 152 residues long: Cuticle protein 64 (152 aa).

Tandem repeats lie at residues 27 to 30, 33 to 37, 39 to 42, 86 to 89, 92 to 95, 98 to 101, and 127 to 130.

Its function is as follows. Component of the cuticle of migratory locust which contains more than 100 different structural proteins. The protein is Cuticle protein 64 of Locusta migratoria (Migratory locust).